The primary structure comprises 453 residues: Bifunctional protein GlmU (453 aa).

A pyrophosphorylase region spans residues methionine 1–arginine 226. Residues leucine 8 to glycine 11, lysine 22, glutamine 73, glycine 78 to threonine 79, tyrosine 100 to aspartate 102, glycine 137, glutamate 151, asparagine 166, and asparagine 224 each bind UDP-N-acetyl-alpha-D-glucosamine. Aspartate 102 provides a ligand contact to Mg(2+). Residue asparagine 224 participates in Mg(2+) binding. The segment at valine 227–alanine 247 is linker. Residues glycine 248–lysine 453 are N-acetyltransferase. The UDP-N-acetyl-alpha-D-glucosamine site is built by arginine 330 and lysine 348. The Proton acceptor role is filled by histidine 360. UDP-N-acetyl-alpha-D-glucosamine-binding residues include tyrosine 363 and asparagine 374. Acetyl-CoA-binding positions include alanine 377, asparagine 383–tyrosine 384, serine 402, alanine 420, and arginine 437.

In the N-terminal section; belongs to the N-acetylglucosamine-1-phosphate uridyltransferase family. It in the C-terminal section; belongs to the transferase hexapeptide repeat family. Homotrimer. It depends on Mg(2+) as a cofactor.

The protein resides in the cytoplasm. It catalyses the reaction alpha-D-glucosamine 1-phosphate + acetyl-CoA = N-acetyl-alpha-D-glucosamine 1-phosphate + CoA + H(+). The catalysed reaction is N-acetyl-alpha-D-glucosamine 1-phosphate + UTP + H(+) = UDP-N-acetyl-alpha-D-glucosamine + diphosphate. Its pathway is nucleotide-sugar biosynthesis; UDP-N-acetyl-alpha-D-glucosamine biosynthesis; N-acetyl-alpha-D-glucosamine 1-phosphate from alpha-D-glucosamine 6-phosphate (route II): step 2/2. The protein operates within nucleotide-sugar biosynthesis; UDP-N-acetyl-alpha-D-glucosamine biosynthesis; UDP-N-acetyl-alpha-D-glucosamine from N-acetyl-alpha-D-glucosamine 1-phosphate: step 1/1. It functions in the pathway bacterial outer membrane biogenesis; LPS lipid A biosynthesis. Its function is as follows. Catalyzes the last two sequential reactions in the de novo biosynthetic pathway for UDP-N-acetylglucosamine (UDP-GlcNAc). The C-terminal domain catalyzes the transfer of acetyl group from acetyl coenzyme A to glucosamine-1-phosphate (GlcN-1-P) to produce N-acetylglucosamine-1-phosphate (GlcNAc-1-P), which is converted into UDP-GlcNAc by the transfer of uridine 5-monophosphate (from uridine 5-triphosphate), a reaction catalyzed by the N-terminal domain. This Aeromonas hydrophila subsp. hydrophila (strain ATCC 7966 / DSM 30187 / BCRC 13018 / CCUG 14551 / JCM 1027 / KCTC 2358 / NCIMB 9240 / NCTC 8049) protein is Bifunctional protein GlmU.